The following is a 546-amino-acid chain: CTP synthase (546 aa).

The segment at 1–266 (MTTRYIFVTG…DQLVTKRFGI (266 aa)) is amidoligase domain. S14 contacts CTP. A UTP-binding site is contributed by S14. ATP contacts are provided by residues 15-20 (SLGKGI) and D72. Mg(2+)-binding residues include D72 and E140. CTP contacts are provided by residues 147-149 (DIE), 187-192 (KTKPTQ), and K223. Residues 187–192 (KTKPTQ) and K223 each bind UTP. Residue 239 to 241 (KDV) participates in ATP binding. The region spanning 291–542 (TIGMVGKYIE…VAAAYTYQKR (252 aa)) is the Glutamine amidotransferase type-1 domain. G352 lines the L-glutamine pocket. C379 acts as the Nucleophile; for glutamine hydrolysis in catalysis. Residues 380–383 (LGMQ), E403, and R470 each bind L-glutamine. Residues H515 and E517 contribute to the active site.

It belongs to the CTP synthase family. Homotetramer.

It catalyses the reaction UTP + L-glutamine + ATP + H2O = CTP + L-glutamate + ADP + phosphate + 2 H(+). The enzyme catalyses L-glutamine + H2O = L-glutamate + NH4(+). It carries out the reaction UTP + NH4(+) + ATP = CTP + ADP + phosphate + 2 H(+). It participates in pyrimidine metabolism; CTP biosynthesis via de novo pathway; CTP from UDP: step 2/2. Allosterically activated by GTP, when glutamine is the substrate; GTP has no effect on the reaction when ammonia is the substrate. The allosteric effector GTP functions by stabilizing the protein conformation that binds the tetrahedral intermediate(s) formed during glutamine hydrolysis. Inhibited by the product CTP, via allosteric rather than competitive inhibition. Functionally, catalyzes the ATP-dependent amination of UTP to CTP with either L-glutamine or ammonia as the source of nitrogen. Regulates intracellular CTP levels through interactions with the four ribonucleotide triphosphates. This Shewanella halifaxensis (strain HAW-EB4) protein is CTP synthase.